Here is a 363-residue protein sequence, read N- to C-terminus: Peptide chain release factor 1 (363 aa).

N5-methylglutamine is present on Gln-237.

Belongs to the prokaryotic/mitochondrial release factor family. Methylated by PrmC. Methylation increases the termination efficiency of RF1.

Its subcellular location is the cytoplasm. In terms of biological role, peptide chain release factor 1 directs the termination of translation in response to the peptide chain termination codons UAG and UAA. This chain is Peptide chain release factor 1, found in Marinobacter nauticus (strain ATCC 700491 / DSM 11845 / VT8) (Marinobacter aquaeolei).